The primary structure comprises 178 residues: Plasmid transfer protein TraF (178 aa).

A signal peptide spans 1–30 (MSRILKRIAAGVVIAGVAALLLAAGGYAAG).

Belongs to the peptidase S26C family.

It is found in the periplasm. In terms of biological role, required for donor-specific phage sensitivity. May be involved in pilus assembly. The chain is Plasmid transfer protein TraF (traF) from Escherichia coli.